The primary structure comprises 203 residues: Lipoprotein MlpJ (203 aa).

The first 17 residues, Met1 to Ser17, serve as a signal peptide directing secretion. Cys18 is lipidated: N-palmitoyl cysteine. Cys18 carries S-diacylglycerol cysteine lipidation. The segment at Leu26 to Pro47 is disordered.

This sequence belongs to the Multicopy lipoprotein (Mlp) family.

The protein localises to the cell outer membrane. An outer membrane protein that may participate in pathogenesis. Some human Lyme disease patients have antibodies against this protein. The Mlp proteins probably undergo intragenic recombination, generating new alleles. This is Lipoprotein MlpJ from Borreliella burgdorferi (strain ATCC 35210 / DSM 4680 / CIP 102532 / B31) (Borrelia burgdorferi).